The sequence spans 569 residues: Paxillin-B (569 aa).

The LD motif 1 motif lies at D10 to L18. The span at Q62–N78 shows a compositional bias: polar residues. The disordered stretch occupies residues Q62–I103. The segment covering T79–Q102 has biased composition (low complexity). The LD motif 2 signature appears at L106–L112. The segment at T129–L311 is disordered. Low complexity predominate over residues N150 to S161. 2 stretches are compositionally biased toward polar residues: residues R162–K188 and T196–Y206. Positions S207–P217 are enriched in low complexity. Residues L232–L239 carry the LD motif 3 motif. A compositionally biased stretch (basic residues) spans H258–P272. Residues N273–N301 are compositionally biased toward low complexity. The LD motif 4 motif lies at L311–L318. 4 consecutive LIM zinc-binding domains span residues G334–F391, A393–V452, R453–G510, and S511–A569.

It belongs to the paxillin family. In terms of tissue distribution, expressed in the upper and lower cup of the fruiting body.

It is found in the cytoplasm. The protein localises to the cell cortex. The protein resides in the cell projection. Its subcellular location is the filopodium. It localises to the cell junction. It is found in the focal adhesion. The protein localises to the cytoskeleton. Functionally, required for cell-substrate adhesion, cell sorting, slug migration, and cell differentiation. May function upstream of limB. The protein is Paxillin-B (paxB) of Dictyostelium discoideum (Social amoeba).